Consider the following 498-residue polypeptide: ATP synthase subunit beta, chloroplastic (498 aa).

172–179 contacts ATP; sequence GGAGVGKT.

This sequence belongs to the ATPase alpha/beta chains family. In terms of assembly, F-type ATPases have 2 components, CF(1) - the catalytic core - and CF(0) - the membrane proton channel. CF(1) has five subunits: alpha(3), beta(3), gamma(1), delta(1), epsilon(1). CF(0) has four main subunits: a(1), b(1), b'(1) and c(9-12).

Its subcellular location is the plastid. The protein resides in the chloroplast thylakoid membrane. It catalyses the reaction ATP + H2O + 4 H(+)(in) = ADP + phosphate + 5 H(+)(out). Functionally, produces ATP from ADP in the presence of a proton gradient across the membrane. The catalytic sites are hosted primarily by the beta subunits. The polypeptide is ATP synthase subunit beta, chloroplastic (Castanea sativa (Sweet chestnut)).